Here is a 252-residue protein sequence, read N- to C-terminus: Ribosomal RNA small subunit methyltransferase J (252 aa).

S-adenosyl-L-methionine-binding positions include 126 to 127 and Asp176; that span reads ER.

It belongs to the methyltransferase superfamily. RsmJ family.

It is found in the cytoplasm. The catalysed reaction is guanosine(1516) in 16S rRNA + S-adenosyl-L-methionine = N(2)-methylguanosine(1516) in 16S rRNA + S-adenosyl-L-homocysteine + H(+). Specifically methylates the guanosine in position 1516 of 16S rRNA. The polypeptide is Ribosomal RNA small subunit methyltransferase J (Bdellovibrio bacteriovorus (strain ATCC 15356 / DSM 50701 / NCIMB 9529 / HD100)).